We begin with the raw amino-acid sequence, 323 residues long: Thioredoxin reductase (323 aa).

42-49 serves as a coordination point for FAD; that stretch reads YRAEADGA. Cys-143 and Cys-146 form a disulfide bridge. An FAD-binding site is contributed by 286–295; sequence DVLCNEVKQA.

Belongs to the class-II pyridine nucleotide-disulfide oxidoreductase family. In terms of assembly, homodimer. The cofactor is FAD.

Its subcellular location is the cytoplasm. The enzyme catalyses [thioredoxin]-dithiol + NADP(+) = [thioredoxin]-disulfide + NADPH + H(+). The protein is Thioredoxin reductase (trxB) of Aquifex aeolicus (strain VF5).